The chain runs to 396 residues: Anaerobic glycerol-3-phosphate dehydrogenase subunit C (396 aa).

4Fe-4S ferredoxin-type domains are found at residues 2–29 (NDTSFENCIKCTVCTTACPVSRVNPGYP) and 45–76 (DGALYDEALKYCINCKRCEVACPSDVKIGDII). Cysteine 9, cysteine 12, cysteine 15, cysteine 19, cysteine 56, cysteine 59, cysteine 62, and cysteine 66 together coordinate [4Fe-4S] cluster.

As to quaternary structure, composed of a catalytic GlpA/B dimer and of GlpC.

It localises to the cell inner membrane. The protein operates within polyol metabolism; glycerol degradation via glycerol kinase pathway; glycerone phosphate from sn-glycerol 3-phosphate (anaerobic route): step 1/1. Electron transfer protein; may also function as the membrane anchor for the GlpAB dimer. This Escherichia coli O157:H7 protein is Anaerobic glycerol-3-phosphate dehydrogenase subunit C (glpC).